Here is a 315-residue protein sequence, read N- to C-terminus: Nucleotide-binding protein PsycPRwf_2129 (315 aa).

G29–T36 serves as a coordination point for ATP. GTP is bound at residue D79–T82.

It belongs to the RapZ-like family.

In terms of biological role, displays ATPase and GTPase activities. The sequence is that of Nucleotide-binding protein PsycPRwf_2129 from Psychrobacter sp. (strain PRwf-1).